The sequence spans 116 residues: Large ribosomal subunit protein eL31 (116 aa).

This sequence belongs to the eukaryotic ribosomal protein eL31 family.

The protein is Large ribosomal subunit protein eL31 (RPL31) of Chlamydomonas reinhardtii (Chlamydomonas smithii).